Reading from the N-terminus, the 360-residue chain is MLVWLASFLEQYFSSFHVISYLTVRAVLSLLTALLLSLWIGPKMILRLQIFKFGQEVRNDGPESHFQKRGTPTMGGIMILATITASSLLWGDLSNPYIWCSLFVLLGYGAIGFVDDYRKIKYKNTDGLIARWKYFWLSVVAFIAVFTMYMIGKDTDATRLVVPFFKDIMPQLGLFYIVLAYFVIVGTSNAVNLTDGLDGLAIMPTVFVAGAFAIIAWATGNVEISKYLYIPYVSYTSELVIFCTAIVGAGLGFLWFNTYPAQVFMGDVGSLALGGALGVIAVLVRQEFLLVIMGGVFVMETVSVILQVGSYKLRKKRIFRMAPIHHHYELKGWPEPRVIIRFWIISLMLVLLGLVTLKLR.

A run of 10 helical transmembrane segments spans residues 26 to 46 (AVLS…KMIL), 73 to 93 (TMGG…WGDL), 94 to 114 (SNPY…IGFV), 132 to 152 (WKYF…YMIG), 168 to 188 (IMPQ…VGTS), 199 to 219 (GLAI…AWAT), 239 to 259 (LVIF…FNTY), 263 to 283 (VFMG…IAVL), 288 to 308 (FLLV…ILQV), and 338 to 358 (VIIR…VTLK).

This sequence belongs to the glycosyltransferase 4 family. MraY subfamily. Mg(2+) serves as cofactor.

Its subcellular location is the cell inner membrane. The enzyme catalyses UDP-N-acetyl-alpha-D-muramoyl-L-alanyl-gamma-D-glutamyl-meso-2,6-diaminopimeloyl-D-alanyl-D-alanine + di-trans,octa-cis-undecaprenyl phosphate = di-trans,octa-cis-undecaprenyl diphospho-N-acetyl-alpha-D-muramoyl-L-alanyl-D-glutamyl-meso-2,6-diaminopimeloyl-D-alanyl-D-alanine + UMP. The protein operates within cell wall biogenesis; peptidoglycan biosynthesis. In terms of biological role, catalyzes the initial step of the lipid cycle reactions in the biosynthesis of the cell wall peptidoglycan: transfers peptidoglycan precursor phospho-MurNAc-pentapeptide from UDP-MurNAc-pentapeptide onto the lipid carrier undecaprenyl phosphate, yielding undecaprenyl-pyrophosphoryl-MurNAc-pentapeptide, known as lipid I. The protein is Phospho-N-acetylmuramoyl-pentapeptide-transferase of Actinobacillus succinogenes (strain ATCC 55618 / DSM 22257 / CCUG 43843 / 130Z).